The following is a 473-amino-acid chain: Argininosuccinate lyase (473 aa).

2-(N(omega)-L-arginino)succinate contacts are provided by serine 34, asparagine 121, and threonine 166. Histidine 167 serves as the catalytic Proton acceptor. The Proton donor role is filled by serine 289. The 2-(N(omega)-L-arginino)succinate site is built by asparagine 297, tyrosine 329, and glutamine 334.

The protein belongs to the lyase 1 family. Argininosuccinate lyase subfamily.

The enzyme catalyses 2-(N(omega)-L-arginino)succinate = fumarate + L-arginine. It functions in the pathway amino-acid biosynthesis; L-arginine biosynthesis; L-arginine from L-ornithine and carbamoyl phosphate: step 3/3. The chain is Argininosuccinate lyase (ARG7) from Chlamydomonas reinhardtii (Chlamydomonas smithii).